The primary structure comprises 184 residues: Large ribosomal subunit protein uL5 (184 aa).

The protein belongs to the universal ribosomal protein uL5 family. In terms of assembly, part of the 50S ribosomal subunit; part of the 5S rRNA/L5/L18/L25 subcomplex. Contacts the 5S rRNA and the P site tRNA. Forms a bridge to the 30S subunit in the 70S ribosome.

This is one of the proteins that bind and probably mediate the attachment of the 5S RNA into the large ribosomal subunit, where it forms part of the central protuberance. In the 70S ribosome it contacts protein S13 of the 30S subunit (bridge B1b), connecting the 2 subunits; this bridge is implicated in subunit movement. Contacts the P site tRNA; the 5S rRNA and some of its associated proteins might help stabilize positioning of ribosome-bound tRNAs. The protein is Large ribosomal subunit protein uL5 of Thermotoga maritima (strain ATCC 43589 / DSM 3109 / JCM 10099 / NBRC 100826 / MSB8).